A 444-amino-acid polypeptide reads, in one-letter code: uncharacterized protein (444 aa).

A compositionally biased stretch (basic and acidic residues) spans 1–11 (MASSAGRDKLR). The tract at residues 1–35 (MASSAGRDKLRSRGQRVFAFGSSTPRDLSHMSKVP) is disordered.

This is an uncharacterized protein from Caenorhabditis elegans.